A 496-amino-acid polypeptide reads, in one-letter code: Probable malate:quinone oxidoreductase (496 aa).

Belongs to the MQO family. FAD serves as cofactor.

It carries out the reaction (S)-malate + a quinone = a quinol + oxaloacetate. It participates in carbohydrate metabolism; tricarboxylic acid cycle; oxaloacetate from (S)-malate (quinone route): step 1/1. The sequence is that of Probable malate:quinone oxidoreductase from Prochlorococcus marinus (strain NATL1A).